Here is a 400-residue protein sequence, read N- to C-terminus: CinA-like protein (400 aa).

Belongs to the CinA family.

In Escherichia coli (strain SMS-3-5 / SECEC), this protein is CinA-like protein.